We begin with the raw amino-acid sequence, 427 residues long: Adenylosuccinate synthetase (427 aa).

GTP is bound by residues Gly-12 to Lys-18 and Gly-40 to Thr-42. The Proton acceptor role is filled by Asp-13. The Mg(2+) site is built by Asp-13 and Gly-40. IMP-binding positions include Asp-13–Lys-16, Asn-38–His-41, Thr-128, Arg-142, Gln-223, Thr-238, and Arg-302. His-41 serves as the catalytic Proton donor. Val-298–Arg-304 is a binding site for substrate. Residues Arg-304, Lys-330–Asp-332, and Gly-412–Gly-414 contribute to the GTP site.

Belongs to the adenylosuccinate synthetase family. As to quaternary structure, homodimer. It depends on Mg(2+) as a cofactor.

Its subcellular location is the cytoplasm. It carries out the reaction IMP + L-aspartate + GTP = N(6)-(1,2-dicarboxyethyl)-AMP + GDP + phosphate + 2 H(+). The protein operates within purine metabolism; AMP biosynthesis via de novo pathway; AMP from IMP: step 1/2. Functionally, plays an important role in the de novo pathway of purine nucleotide biosynthesis. Catalyzes the first committed step in the biosynthesis of AMP from IMP. The protein is Adenylosuccinate synthetase of Streptomyces coelicolor (strain ATCC BAA-471 / A3(2) / M145).